A 256-amino-acid polypeptide reads, in one-letter code: LexA repressor (256 aa).

Residues 1–31 form a disordered region; the sequence is MTSQGRGTRRGGTRGNVRAFPEGPTDAGLTP. Positions 53 to 73 form a DNA-binding region, H-T-H motif; that stretch reads VREIGEAVGLTSTSSVAHQLK. Active-site for autocatalytic cleavage activity residues include Ser-180 and Lys-217.

It belongs to the peptidase S24 family. As to quaternary structure, homodimer.

The catalysed reaction is Hydrolysis of Ala-|-Gly bond in repressor LexA.. In terms of biological role, represses a number of genes involved in the response to DNA damage (SOS response), including recA and lexA. In the presence of single-stranded DNA, RecA interacts with LexA causing an autocatalytic cleavage which disrupts the DNA-binding part of LexA, leading to derepression of the SOS regulon and eventually DNA repair. The polypeptide is LexA repressor (Frankia casuarinae (strain DSM 45818 / CECT 9043 / HFP020203 / CcI3)).